A 1392-amino-acid polypeptide reads, in one-letter code: MEVLMAERANLVFHNKAIDGTAMKRLISRLIDHFGMAYTSHILDQVKTLGFQQATATSISLGIDDLLTIPSKGWLVQDAEQQSLILEKHHHYGNVHAVEKLRQSIEIWYATSEYLRQEMNPNFRMTDPFNPVHIMSFSGARGNASQVHQLVGMRGLMSDPQGQMIDLPIQSNLREGLSLTEYIISCYGARKGVVDTAVRTSDAGYLTRRLVEVVQHIVVRRTDCGTARGISVSPRNGMMPERFFIQTLIGRVLADDIYMGPRCIATRNQDIGIGLVNRFITFRAQPISIRTPFTCRSTSWICRLCYGRSPTHGDLVELGEAVGIIAGQSIGEPGTQLTLRTFHTGGVFTGGTAEHVRAPSNGKIKFNEDLVHPTRTRHGHPAFLCSIDLYVTIESEDILHNVNIPPKSLLLVQNDQYVESEQVIAEIRAGISTLNFKEKVRKHIYSDSDGEMHWSTDVYHAPEFTYGNVHLLPKTSHLWILLGGPCRSSLVYLSIHKDQDQMNAHFLSGKRRYTSNLSVTNDQARQKLFSSDFSVKKEDRIPDYSDLNRIICAGQYNLVYSPILHENSDLLSKRRRNKFIIPLHSIQELENELMPCSGISIEIPVNGIFRRNSILAYFDDPRYRRKSSGIIKYGTVETHSVIKKEDLLEYRGVKEFSPKYQMKVDLFFFIPEEVHILPGSSSIMVRNNSIVGVDTQITLNLRSRVGGLVRVERKKKQIELKIFSGDIHFPGETDKISRHTGVLIPPGTGKRNSKESKKVKNWIYVQRITPSKKRFFVLVRPVVTYEITDGINLATLFPPDPLQERDNVQLRIVNYILYGNGKPIRGISDTSIQLVRTCLVLNWNQDKKSSSCEEARASFVEIRTNGLIRHFLRINLVKSPISYIGKRNDPSGSGLLSDNGSDCTNINPFSSIYSYSKAKIQQSLNQPQGTIHTLLNRNKECQSLIILSAANCSRMGPFKDVKYHSVIKESIKKDPLIPIRNSLGPLGTSLPIENFYSSYHLITHNQILVTNYLQLDNLKQTFQVIKFHYYLMDENGKIFNPDPCRNIILNPFNLNWYFLHHNYCEETSKIISLGQFICENVCIAKNGPPLKSGQVILVQVDSIVIRSAKPYLATPGATVHGHYGETLYEGDTLVTFIYEKSRSGDITQGLPKVEQVLEVRSIDSISMNLEKRIEGWNKCITRILGIPWGFLIGAELTIAQSRISLVNKIQQVYRSQGVQIHNRHIEIIVRQITSKVLVSEDGMSNVFSPGELIGLLRAERMGRALEEAICYRVVLLGITRASLNTQSFISEASFQETARVLAKAALRGRIDWLKGLKENVVLGGVIPVGTGFKGLVHPSKQHNNIPLETKKKNLFEGEMRDILFHHRKLFDSCLSKNFHDIPEQSFIGFNDS.

Cysteine 224, cysteine 295, cysteine 302, and cysteine 305 together coordinate Zn(2+).

It belongs to the RNA polymerase beta' chain family. RpoC2 subfamily. In plastids the minimal PEP RNA polymerase catalytic core is composed of four subunits: alpha, beta, beta', and beta''. When a (nuclear-encoded) sigma factor is associated with the core the holoenzyme is formed, which can initiate transcription. Requires Zn(2+) as cofactor.

It is found in the plastid. Its subcellular location is the chloroplast. The enzyme catalyses RNA(n) + a ribonucleoside 5'-triphosphate = RNA(n+1) + diphosphate. DNA-dependent RNA polymerase catalyzes the transcription of DNA into RNA using the four ribonucleoside triphosphates as substrates. The polypeptide is DNA-directed RNA polymerase subunit beta'' (Nicotiana tomentosiformis (Tobacco)).